Reading from the N-terminus, the 418-residue chain is Tektin-1 (418 aa).

Coiled coils occupy residues 20 to 107, 134 to 177, 266 to 308, and 332 to 383; these read NKSQ…SYKE, QELQ…DLRD, NGLK…QQEG, and IAQY…ENTI.

Belongs to the tektin family. Microtubule inner protein component of sperm flagellar doublet microtubules. Ubiquitinated, leading to its degradation. Deubiquitinated by USP16, promoting its stability.

The protein resides in the cytoplasm. Its subcellular location is the cytoskeleton. It localises to the cilium axoneme. It is found in the flagellum axoneme. In terms of biological role, microtubule inner protein (MIP) part of the dynein-decorated doublet microtubules (DMTs) in cilia and flagellar axoneme. Forms filamentous polymers in the walls of ciliary and flagellar microtubules. The polypeptide is Tektin-1 (Tekt1) (Mus musculus (Mouse)).